Consider the following 262-residue polypeptide: Glucosamine-6-phosphate deaminase (262 aa).

D63 functions as the Proton acceptor; for enolization step in the catalytic mechanism. The active-site For ring-opening step is the N129. Residue H131 is the Proton acceptor; for ring-opening step of the active site. E136 serves as the catalytic For ring-opening step.

It belongs to the glucosamine/galactosamine-6-phosphate isomerase family. NagB subfamily.

It catalyses the reaction alpha-D-glucosamine 6-phosphate + H2O = beta-D-fructose 6-phosphate + NH4(+). The protein operates within amino-sugar metabolism; N-acetylneuraminate degradation; D-fructose 6-phosphate from N-acetylneuraminate: step 5/5. Functionally, catalyzes the reversible isomerization-deamination of glucosamine 6-phosphate (GlcN6P) to form fructose 6-phosphate (Fru6P) and ammonium ion. In Bacillus cytotoxicus (strain DSM 22905 / CIP 110041 / 391-98 / NVH 391-98), this protein is Glucosamine-6-phosphate deaminase.